Consider the following 362-residue polypeptide: Phospho-N-acetylmuramoyl-pentapeptide-transferase (362 aa).

10 helical membrane-spanning segments follow: residues 27-47 (VMAA…VIRW), 73-93 (TMGG…WGDL), 97-117 (YVWV…VDDW), 132-152 (WKYL…GLTA), 160-180 (LIVP…FVAL), 200-220 (GLAI…AYVA), 237-257 (AGEL…FLWF), 264-284 (VFMG…VAVV), 289-309 (IVLF…MVQV), and 339-359 (QVVV…LSTL).

This sequence belongs to the glycosyltransferase 4 family. MraY subfamily. It depends on Mg(2+) as a cofactor.

The protein resides in the cell inner membrane. It carries out the reaction UDP-N-acetyl-alpha-D-muramoyl-L-alanyl-gamma-D-glutamyl-meso-2,6-diaminopimeloyl-D-alanyl-D-alanine + di-trans,octa-cis-undecaprenyl phosphate = di-trans,octa-cis-undecaprenyl diphospho-N-acetyl-alpha-D-muramoyl-L-alanyl-D-glutamyl-meso-2,6-diaminopimeloyl-D-alanyl-D-alanine + UMP. Its pathway is cell wall biogenesis; peptidoglycan biosynthesis. Catalyzes the initial step of the lipid cycle reactions in the biosynthesis of the cell wall peptidoglycan: transfers peptidoglycan precursor phospho-MurNAc-pentapeptide from UDP-MurNAc-pentapeptide onto the lipid carrier undecaprenyl phosphate, yielding undecaprenyl-pyrophosphoryl-MurNAc-pentapeptide, known as lipid I. The sequence is that of Phospho-N-acetylmuramoyl-pentapeptide-transferase from Aromatoleum aromaticum (strain DSM 19018 / LMG 30748 / EbN1) (Azoarcus sp. (strain EbN1)).